We begin with the raw amino-acid sequence, 632 residues long: Chaperone protein HtpG (632 aa).

The a; substrate-binding stretch occupies residues 1–339 (MAHETMSFQA…SADLPLNVSR (339 aa)). Positions 340-559 (EILQESRDVK…DNDMSGYLQR (220 aa)) are b. Residues 560-632 (MLKAAGQNAP…TNALLLSRAA (73 aa)) are c.

This sequence belongs to the heat shock protein 90 family. Homodimer.

It localises to the cytoplasm. In terms of biological role, molecular chaperone. Has ATPase activity. The sequence is that of Chaperone protein HtpG from Burkholderia ambifaria (strain ATCC BAA-244 / DSM 16087 / CCUG 44356 / LMG 19182 / AMMD) (Burkholderia cepacia (strain AMMD)).